A 416-amino-acid polypeptide reads, in one-letter code: Dihydrolipoyllysine-residue succinyltransferase component of 2-oxoglutarate dehydrogenase complex (416 aa).

A Lipoyl-binding domain is found at 3-78 (IVDVKVPQLS…VADEIIAKID (76 aa)). Lys44 is modified (N6-lipoyllysine). The 38-residue stretch at 115-152 (VAMPSAAKLMAEAGLSAGQVAGTGKDGRITKGDALAAA) folds into the Peripheral subunit-binding (PSBD) domain. Residues His387 and Asp391 contribute to the active site.

Belongs to the 2-oxoacid dehydrogenase family. As to quaternary structure, forms a 24-polypeptide structural core with octahedral symmetry. Part of the 2-oxoglutarate dehydrogenase (OGDH) complex composed of E1 (2-oxoglutarate dehydrogenase), E2 (dihydrolipoamide succinyltransferase) and E3 (dihydrolipoamide dehydrogenase); the complex contains multiple copies of the three enzymatic components (E1, E2 and E3). The cofactor is (R)-lipoate.

It carries out the reaction N(6)-[(R)-dihydrolipoyl]-L-lysyl-[protein] + succinyl-CoA = N(6)-[(R)-S(8)-succinyldihydrolipoyl]-L-lysyl-[protein] + CoA. Its pathway is amino-acid degradation; L-lysine degradation via saccharopine pathway; glutaryl-CoA from L-lysine: step 6/6. Its function is as follows. E2 component of the 2-oxoglutarate dehydrogenase (OGDH) complex which catalyzes the second step in the conversion of 2-oxoglutarate to succinyl-CoA and CO(2). The chain is Dihydrolipoyllysine-residue succinyltransferase component of 2-oxoglutarate dehydrogenase complex (sucB) from Cupriavidus necator (strain ATCC 17699 / DSM 428 / KCTC 22496 / NCIMB 10442 / H16 / Stanier 337) (Ralstonia eutropha).